The following is a 425-amino-acid chain: Protein-glutamate methylesterase/protein-glutamine glutaminase (425 aa).

In terms of domain architecture, Response regulatory spans 22-140 (RVMVVDDSVV…EVAAADIFRH (119 aa)). D73 bears the 4-aspartylphosphate mark. 2 disordered regions span residues 150-174 (AAKR…SNAS) and 203-223 (VQRE…RPQP). In terms of domain architecture, CheB-type methylesterase spans 221–417 (PQPTLRSFSA…PLQQIAPKLV (197 aa)). Residues S241, H269, and D365 contribute to the active site.

This sequence belongs to the CheB family. Post-translationally, phosphorylated by CheA. Phosphorylation of the N-terminal regulatory domain activates the methylesterase activity.

Its subcellular location is the cytoplasm. It carries out the reaction [protein]-L-glutamate 5-O-methyl ester + H2O = L-glutamyl-[protein] + methanol + H(+). The catalysed reaction is L-glutaminyl-[protein] + H2O = L-glutamyl-[protein] + NH4(+). Involved in chemotaxis. Part of a chemotaxis signal transduction system that modulates chemotaxis in response to various stimuli. Catalyzes the demethylation of specific methylglutamate residues introduced into the chemoreceptors (methyl-accepting chemotaxis proteins or MCP) by CheR. Also mediates the irreversible deamidation of specific glutamine residues to glutamic acid. The sequence is that of Protein-glutamate methylesterase/protein-glutamine glutaminase from Nitrobacter winogradskyi (strain ATCC 25391 / DSM 10237 / CIP 104748 / NCIMB 11846 / Nb-255).